We begin with the raw amino-acid sequence, 261 residues long: Small ribosomal subunit protein eS4B (261 aa).

At S32 the chain carries Phosphoserine. Residues 42 to 105 (LPLIVFLRNR…NENFRLVYDV (64 aa)) form the S4 RNA-binding domain. K62 participates in a covalent cross-link: Glycyl lysine isopeptide (Lys-Gly) (interchain with G-Cter in ubiquitin). T115 bears the Phosphothreonine mark. Residues K134, K161, K168, K174, K179, K211, and K233 each participate in a glycyl lysine isopeptide (Lys-Gly) (interchain with G-Cter in ubiquitin) cross-link. S247 bears the Phosphoserine mark.

This sequence belongs to the eukaryotic ribosomal protein eS4 family. Component of the small ribosomal subunit (SSU). Mature yeast ribosomes consist of a small (40S) and a large (60S) subunit. The 40S small subunit contains 1 molecule of ribosomal RNA (18S rRNA) and 33 different proteins (encoded by 57 genes). The large 60S subunit contains 3 rRNA molecules (25S, 5.8S and 5S rRNA) and 46 different proteins (encoded by 81 genes).

The protein localises to the cytoplasm. In terms of biological role, component of the ribosome, a large ribonucleoprotein complex responsible for the synthesis of proteins in the cell. The small ribosomal subunit (SSU) binds messenger RNAs (mRNAs) and translates the encoded message by selecting cognate aminoacyl-transfer RNA (tRNA) molecules. The large subunit (LSU) contains the ribosomal catalytic site termed the peptidyl transferase center (PTC), which catalyzes the formation of peptide bonds, thereby polymerizing the amino acids delivered by tRNAs into a polypeptide chain. The nascent polypeptides leave the ribosome through a tunnel in the LSU and interact with protein factors that function in enzymatic processing, targeting, and the membrane insertion of nascent chains at the exit of the ribosomal tunnel. The polypeptide is Small ribosomal subunit protein eS4B (Saccharomyces cerevisiae (strain ATCC 204508 / S288c) (Baker's yeast)).